The following is a 452-amino-acid chain: Membrane-bound lytic murein transglycosylase D (452 aa).

The signal sequence occupies residues 1 to 15 (MKAKAILLASVLLVG). Cysteine 16 carries the N-palmitoyl cysteine lipid modification. Cysteine 16 carries S-diacylglycerol cysteine lipidation. Residues 113–198 (NMPMELVLLP…LLTVAAYNSG (86 aa)) form a slt-type domain region. Glutamate 125 is an active-site residue. LysM domains follow at residues 341–384 (RVYT…SLTI) and 400–448 (ITYR…KNNN).

Belongs to the transglycosylase Slt family.

The protein localises to the cell membrane. The catalysed reaction is Exolytic cleavage of the (1-&gt;4)-beta-glycosidic linkage between N-acetylmuramic acid (MurNAc) and N-acetylglucosamine (GlcNAc) residues in peptidoglycan, from either the reducing or the non-reducing ends of the peptidoglycan chains, with concomitant formation of a 1,6-anhydrobond in the MurNAc residue.. Murein-degrading enzyme. May play a role in recycling of muropeptides during cell elongation and/or cell division. The polypeptide is Membrane-bound lytic murein transglycosylase D (mltD) (Escherichia coli O6:H1 (strain CFT073 / ATCC 700928 / UPEC)).